A 117-amino-acid chain; its full sequence is Fluoride-specific ion channel FluC 2 (117 aa).

2 consecutive transmembrane segments (helical) span residues 1–21 and 46–66; these read MISIILVMIGGGFGAIARSAI and FLIGLTIGLSISISWFPAFFV. Na(+) contacts are provided by G71 and T74. Residues 95–115 traverse the membrane as a helical segment; sequence LFLNYSLLQFIIGFIACYIGY.

Belongs to the fluoride channel Fluc/FEX (TC 1.A.43) family.

It localises to the cell membrane. It carries out the reaction fluoride(in) = fluoride(out). Na(+) is not transported, but it plays an essential structural role and its presence is essential for fluoride channel function. Fluoride-specific ion channel. Important for reducing fluoride concentration in the cell, thus reducing its toxicity. The chain is Fluoride-specific ion channel FluC 2 from Staphylococcus aureus (strain Mu50 / ATCC 700699).